The chain runs to 496 residues: Angiopoietin-2 (496 aa).

A signal peptide spans 1-18; that stretch reads MWQIIFLTFGWDLVLASA. N-linked (GlcNAc...) asparagine glycosylation is found at asparagine 89, asparagine 119, asparagine 133, asparagine 151, asparagine 240, and asparagine 304. The stretch at 159–256 forms a coiled coil; it reads QLLQHSISTN…QQHDLMETVN (98 aa). One can recognise a Fibrinogen C-terminal domain in the interval 275–495; it reads KEEQTTFRDC…ATTMMIRPAD (221 aa). A disulfide bond links cysteine 284 and cysteine 313. Ca(2+) is bound by residues aspartate 429, aspartate 431, cysteine 433, and cysteine 435. 2 disulfide bridges follow: cysteine 433–cysteine 435 and cysteine 437–cysteine 450.

As to quaternary structure, interacts with TEK/TIE2, competing for the same binding site as ANGPT1. Interacts with ITGA5. Interacts with SVEP1/polydom. Interacts with THBD; this interaction significantly inhibits the generation of activated PC and TAFIa/CPB2 by the thrombin/thrombomodulin complex. As to expression, expressed in the ovary, uterus and placenta.

The protein resides in the secreted. Functionally, binds to TEK/TIE2, competing for the ANGPT1 binding site, and modulating ANGPT1 signaling. Can induce tyrosine phosphorylation of TEK/TIE2 in the absence of ANGPT1. In the absence of angiogenic inducers, such as VEGF, ANGPT2-mediated loosening of cell-matrix contacts may induce endothelial cell apoptosis with consequent vascular regression. In concert with VEGF, it may facilitate endothelial cell migration and proliferation, thus serving as a permissive angiogenic signal. Involved in the regulation of lymphangiogenesis. This chain is Angiopoietin-2 (Angpt2), found in Mus musculus (Mouse).